Consider the following 418-residue polypeptide: MNIPPELTFEVLVRLPLKSLARFRSMCKEWKLVIDSEFFRDCFMSHNSSSVSWSIIQTRPHKLTLEIVGHHGCKTWGLTRSPGSLVSFFAETTIRKLQVLACTDGLVLLYVESCVGTPMYYVGNPLFQEWFRIPLRPKYTSQNVEKLRNHERFSDSGLVTKMQSGIVVSYKVVWLIAHTFAQVDFAIYSSNTGEWEIKNVTCLHSAYWFSHHKSIALNGILHWLSNLTGSFLAYDFYGGHHDACSIIYFPDNGKDYELPRFRRTITTSEGSIVYFNEFGGNANRKVRVWRLVKYTDGPEAWQLFWEASLASVTKLGIDYFPVVMHPLKSEIIYLWSRNKKGMVLFNLRTHVFSLHKESEDERKCMDGCTLSFNWCNEYMETVHRYFSPSFQGGPNLLLASQYVLPRWLSRLPRPQPSN.

Positions 1 to 42 constitute an F-box domain; sequence MNIPPELTFEVLVRLPLKSLARFRSMCKEWKLVIDSEFFRDC.

The protein is Putative F-box protein At3g23950 of Arabidopsis thaliana (Mouse-ear cress).